The chain runs to 217 residues: Resolvase homolog YneB (217 aa).

Residues 2-147 enclose the Resolvase/invertase-type recombinase catalytic domain; sequence KALIYARVST…RGMKRAVKNG (146 aa). S10 serves as the catalytic O-(5'-phospho-DNA)-serine intermediate.

The protein belongs to the site-specific recombinase resolvase family.

This Bacillus subtilis (strain 168) protein is Resolvase homolog YneB (yneB).